A 305-amino-acid chain; its full sequence is NAD kinase (305 aa).

Asp84 functions as the Proton acceptor in the catalytic mechanism. NAD(+) is bound by residues 84-85 (DG), 159-160 (NE), His170, Arg187, Asp189, 200-205 (TAYSLS), and Gln260.

It belongs to the NAD kinase family. A divalent metal cation serves as cofactor.

It is found in the cytoplasm. It carries out the reaction NAD(+) + ATP = ADP + NADP(+) + H(+). Involved in the regulation of the intracellular balance of NAD and NADP, and is a key enzyme in the biosynthesis of NADP. Catalyzes specifically the phosphorylation on 2'-hydroxyl of the adenosine moiety of NAD to yield NADP. The sequence is that of NAD kinase from Pasteurella multocida (strain Pm70).